The chain runs to 436 residues: Histidinol dehydrogenase (436 aa).

Substrate contacts are provided by S242, Q264, and H267. Positions 264 and 267 each coordinate Zn(2+). Catalysis depends on proton acceptor residues E332 and H333. Residues H333, D366, E420, and H425 each contribute to the substrate site. Zn(2+) is bound at residue D366. Position 425 (H425) interacts with Zn(2+).

This sequence belongs to the histidinol dehydrogenase family. Zn(2+) is required as a cofactor.

The enzyme catalyses L-histidinol + 2 NAD(+) + H2O = L-histidine + 2 NADH + 3 H(+). It functions in the pathway amino-acid biosynthesis; L-histidine biosynthesis; L-histidine from 5-phospho-alpha-D-ribose 1-diphosphate: step 9/9. Functionally, catalyzes the sequential NAD-dependent oxidations of L-histidinol to L-histidinaldehyde and then to L-histidine. This is Histidinol dehydrogenase from Nitratidesulfovibrio vulgaris (strain ATCC 29579 / DSM 644 / CCUG 34227 / NCIMB 8303 / VKM B-1760 / Hildenborough) (Desulfovibrio vulgaris).